We begin with the raw amino-acid sequence, 220 residues long: MNEQDKMKAAAARKAIDYVPEGAIIGVGTGSTANFFIDELARIKDRIEGAVASSQATADRLKAIGIQVFDLNGVGELPVYVDGCDEINHYLHMIKGGGGALTREKIVATSSRQFICIADESKLVKRLGAFPLPVEVIPMARSLVARKLVKLGGHPEWRENFVTDNGNLILDVHDLAIDQPLEMEETINRMAGVVTCGLFARRRADVLLLGRSDGTVQTIE.

Substrate-binding positions include Thr29 to Thr32, Asp82 to Asp85, and Lys95 to Gly98. The active-site Proton acceptor is Glu104. Lys122 contacts substrate.

This sequence belongs to the ribose 5-phosphate isomerase family. Homodimer.

It carries out the reaction aldehydo-D-ribose 5-phosphate = D-ribulose 5-phosphate. The protein operates within carbohydrate degradation; pentose phosphate pathway; D-ribose 5-phosphate from D-ribulose 5-phosphate (non-oxidative stage): step 1/1. Functionally, catalyzes the reversible conversion of ribose-5-phosphate to ribulose 5-phosphate. The chain is Ribose-5-phosphate isomerase A from Laribacter hongkongensis (strain HLHK9).